The chain runs to 224 residues: TBP-related factor (224 aa).

Positions 14–34 (RDNVAATSNAAANPHAALQPQ) are disordered. Over residues 17-34 (VAATSNAAANPHAALQPQ) the composition is skewed to low complexity. 2 tandem repeats follow at residues 51 to 127 (LQNI…ARIL) and 141 to 218 (LQNI…SPIL).

Belongs to the TBP family. Primary spermatocytes in the adult testis and in a subset of cells in the dorsal medial region of the embryonic CNS.

The protein resides in the nucleus. Acts as a transcription factor. Binds to the TATA box promoter element which lies close to the position of transcription initiation. Its function is as follows. May be essential for embryonic development. The polypeptide is TBP-related factor (Trf) (Drosophila melanogaster (Fruit fly)).